The chain runs to 337 residues: Holliday junction branch migration complex subunit RuvB (337 aa).

The interval 4–184 (QDRIISAELK…FGIVQRLEFY (181 aa)) is large ATPase domain (RuvB-L). Residues Ile-23, Arg-24, Gly-65, Lys-68, Thr-69, Thr-70, 131 to 133 (EDY), Arg-174, Tyr-184, and Arg-221 each bind ATP. A Mg(2+)-binding site is contributed by Thr-69. Residues 185–255 (DVESLTTIVA…VAQRALDMLS (71 aa)) are small ATPAse domain (RuvB-S). The segment at 258–337 (SQGFDHLDRR…FNYQLPSDFK (80 aa)) is head domain (RuvB-H). DNA contacts are provided by Arg-313 and Arg-318.

The protein belongs to the RuvB family. As to quaternary structure, homohexamer. Forms an RuvA(8)-RuvB(12)-Holliday junction (HJ) complex. HJ DNA is sandwiched between 2 RuvA tetramers; dsDNA enters through RuvA and exits via RuvB. An RuvB hexamer assembles on each DNA strand where it exits the tetramer. Each RuvB hexamer is contacted by two RuvA subunits (via domain III) on 2 adjacent RuvB subunits; this complex drives branch migration. In the full resolvosome a probable DNA-RuvA(4)-RuvB(12)-RuvC(2) complex forms which resolves the HJ.

It is found in the cytoplasm. It catalyses the reaction ATP + H2O = ADP + phosphate + H(+). In terms of biological role, the RuvA-RuvB-RuvC complex processes Holliday junction (HJ) DNA during genetic recombination and DNA repair, while the RuvA-RuvB complex plays an important role in the rescue of blocked DNA replication forks via replication fork reversal (RFR). RuvA specifically binds to HJ cruciform DNA, conferring on it an open structure. The RuvB hexamer acts as an ATP-dependent pump, pulling dsDNA into and through the RuvAB complex. RuvB forms 2 homohexamers on either side of HJ DNA bound by 1 or 2 RuvA tetramers; 4 subunits per hexamer contact DNA at a time. Coordinated motions by a converter formed by DNA-disengaged RuvB subunits stimulates ATP hydrolysis and nucleotide exchange. Immobilization of the converter enables RuvB to convert the ATP-contained energy into a lever motion, pulling 2 nucleotides of DNA out of the RuvA tetramer per ATP hydrolyzed, thus driving DNA branch migration. The RuvB motors rotate together with the DNA substrate, which together with the progressing nucleotide cycle form the mechanistic basis for DNA recombination by continuous HJ branch migration. Branch migration allows RuvC to scan DNA until it finds its consensus sequence, where it cleaves and resolves cruciform DNA. The chain is Holliday junction branch migration complex subunit RuvB from Marinomonas sp. (strain MWYL1).